The sequence spans 109 residues: Iron-sulfur cluster assembly protein CyaY (109 aa).

The protein belongs to the frataxin family.

Its function is as follows. Involved in iron-sulfur (Fe-S) cluster assembly. May act as a regulator of Fe-S biogenesis. The sequence is that of Iron-sulfur cluster assembly protein CyaY from Bordetella bronchiseptica (strain ATCC BAA-588 / NCTC 13252 / RB50) (Alcaligenes bronchisepticus).